The chain runs to 158 residues: SsrA-binding protein (158 aa).

The segment covering 133-148 has biased composition (basic and acidic residues); that stretch reads KAQDKRETSAKRDWNR. The disordered stretch occupies residues 133 to 158; that stretch reads KAQDKRETSAKRDWNRQKARLLKQNG. The span at 149 to 158 shows a compositional bias: basic residues; the sequence is QKARLLKQNG.

This sequence belongs to the SmpB family.

It localises to the cytoplasm. Required for rescue of stalled ribosomes mediated by trans-translation. Binds to transfer-messenger RNA (tmRNA), required for stable association of tmRNA with ribosomes. tmRNA and SmpB together mimic tRNA shape, replacing the anticodon stem-loop with SmpB. tmRNA is encoded by the ssrA gene; the 2 termini fold to resemble tRNA(Ala) and it encodes a 'tag peptide', a short internal open reading frame. During trans-translation Ala-aminoacylated tmRNA acts like a tRNA, entering the A-site of stalled ribosomes, displacing the stalled mRNA. The ribosome then switches to translate the ORF on the tmRNA; the nascent peptide is terminated with the 'tag peptide' encoded by the tmRNA and targeted for degradation. The ribosome is freed to recommence translation, which seems to be the essential function of trans-translation. The polypeptide is SsrA-binding protein (Jannaschia sp. (strain CCS1)).